Here is a 298-residue protein sequence, read N- to C-terminus: Sulfofructose kinase (298 aa).

Asp-13, Lys-27, Gly-39, Ser-95, and Arg-138 together coordinate 6-deoxy-6-sulfo-D-fructose. Residues Thr-212, Gly-214, Gly-217, and Gly-243 each contribute to the ATP site. A 6-deoxy-6-sulfo-D-fructose-binding site is contributed by Asp-244.

Belongs to the carbohydrate kinase PfkB family. Homodimer.

It carries out the reaction 6-deoxy-6-sulfo-D-fructose + ATP = 6-deoxy-6-sulfo-D-fructose 1-phosphate + ADP + H(+). Strongly inhibited by ADP. Activated by sulfoquinovose (SQ), sulfolactaldehyde (SLA) and dihydroxyacetone phosphate (DHAP) (through effects on KM) and by fructose 6-phosphate (F6P), fructose bisphosphate (FBP), phosphoenolpyruvate (PEP) and citrate (through effects on kcat/KM). Phosphorylates 6-deoxy-6-sulfo-D-fructose (SF) to 6-deoxy-6-sulfo-D-fructose 1-phosphate (SFP). Cannot phosphorylate fructose 6-phosphate. This is Sulfofructose kinase (yihV) from Escherichia coli (strain K12).